The primary structure comprises 866 residues: Speckle targeted PIP5K1A-regulated poly(A) polymerase (866 aa).

A Matrin-type zinc finger spans residues 16 to 46 (FRCCLCDVTTANRPSLDAHLKGRKHRDLVQL). In terms of domain architecture, RRM spans 56-128 (RSVFVSGFPR…HTLRVRPREQ (73 aa)). Positions 116–147 (LGGHTLRVRPREQKEFQSPASKSPKGVDSNSH) are disordered. ATP is bound at residue S205. 2 residues coordinate Mg(2+): D216 and D218. Residues D216 and D218 each contribute to the UTP site. 2 disordered regions span residues 223–249 (LGDMEEPQPDPQTPKLPEASSLDSTLA) and 267–321 (LSPT…EGKH). Residues 282-304 (TPSSLAPQTPDSALGSDTVTSPQ) show a composition bias toward polar residues. N393 is a binding site for ATP. Residues N393, R415, Y433, and H550 each contribute to the UTP site. The 59-residue stretch at 492–550 (LSSLLAQFFSCVSCWDLSGSLLSLREGQALMVAGGLPSDLWEGLRLGPMNLQDPFDLSH) folds into the PAP-associated domain. The KA1; binds the bulging loops of U6 snRNA but is dispensable for terminal uridylyltransferase activity stretch occupies residues 599–866 (SSPSSLLSAK…IPQALKNLLK (268 aa)). 3 disordered regions span residues 638 to 687 (QGTK…DHSE), 728 to 755 (EQNPMEPEGAGEGSPGETEKEASHPSSV), and 773 to 792 (RRRFQQQTKEEGRGGPSTGA). A compositionally biased stretch (basic and acidic residues) spans 669–687 (KSCEEGKEEPQGCAGDHSE). Phosphoserine is present on residues S686 and S741.

The protein belongs to the DNA polymerase type-B-like family. In terms of assembly, associates with the cleavage and polyadenylation specificity factor (CPSF) complex. Interacts with CPSF1 and CPSF3; the interaction is direct. Interacts with PIP5K1A. The cofactor is Mg(2+). It depends on Mn(2+) as a cofactor. Post-translationally, phosphorylated by CK1 in the proline-rich (Pro-rich) region.

It localises to the nucleus. The protein resides in the nucleolus. It is found in the nucleus speckle. It carries out the reaction RNA(n) + UTP = RNA(n)-3'-uridine ribonucleotide + diphosphate. The catalysed reaction is RNA(n) + ATP = RNA(n)-3'-adenine ribonucleotide + diphosphate. Its activity is regulated as follows. Adenylyltransferase activity is specifically phosphatidylinositol 4,5-bisphosphate (PtdIns(4,5)P2). In terms of biological role, poly(A) polymerase that creates the 3'-poly(A) tail of specific pre-mRNAs. Localizes to nuclear speckles together with PIP5K1A and mediates polyadenylation of a select set of mRNAs, such as HMOX1. In addition to polyadenylation, it is also required for the 3'-end cleavage of pre-mRNAs: binds to the 3'UTR of targeted pre-mRNAs and promotes the recruitment and assembly of the CPSF complex on the 3'UTR of pre-mRNAs. In addition to adenylyltransferase activity, also has uridylyltransferase activity. However, the ATP ratio is higher than UTP in cells, suggesting that it functions primarily as a poly(A) polymerase. Acts as a specific terminal uridylyltransferase for U6 snRNA in vitro: responsible for a controlled elongation reaction that results in the restoration of the four 3'-terminal UMP-residues found in newly transcribed U6 snRNA. Not involved in replication-dependent histone mRNA degradation. This Rattus norvegicus (Rat) protein is Speckle targeted PIP5K1A-regulated poly(A) polymerase (Tut1).